We begin with the raw amino-acid sequence, 143 residues long: Large-conductance mechanosensitive channel (143 aa).

2 consecutive transmembrane segments (helical) span residues 19–39 and 81–101; these read VGVI…GDLI and GSFL…FGVI.

It belongs to the MscL family. Homopentamer.

It is found in the cell inner membrane. Its function is as follows. Channel that opens in response to stretch forces in the membrane lipid bilayer. May participate in the regulation of osmotic pressure changes within the cell. The sequence is that of Large-conductance mechanosensitive channel from Rhodopseudomonas palustris (strain BisB5).